A 244-amino-acid polypeptide reads, in one-letter code: MTNQKKKEMVQTFQNKFEKKMQELNLDFNRVDLYQQAFSHSSFINDFNMNRLDHNERLEFLGDAVLELTVSRYLFDKYPELPEGNLTKMRATIVCEPSLVIFANKIQLNDLILLGKGEEKTGGRTRPSLVSDAFEAFVGALYLDQGLEAVWQFSEQIIFPYVEDDELDGVVDFKTQFQEYVHRQNKGDVTYRLINEEGPAHHRLFTSEVILEEDAVAEGKGKTKKESEQKAAERAYKILKNKNA.

One can recognise an RNase III domain in the interval 17–146 (FEKKMQELNL…FVGALYLDQG (130 aa)). Residue glutamate 59 participates in Mg(2+) binding. Aspartate 63 is an active-site residue. Mg(2+) is bound by residues aspartate 132 and glutamate 135. Residue glutamate 135 is part of the active site. Residues 172 to 241 (DFKTQFQEYV…AERAYKILKN (70 aa)) enclose the DRBM domain.

Belongs to the ribonuclease III family. As to quaternary structure, homodimer. Requires Mg(2+) as cofactor.

It localises to the cytoplasm. It catalyses the reaction Endonucleolytic cleavage to 5'-phosphomonoester.. Functionally, digests double-stranded RNA. Involved in the processing of primary rRNA transcript to yield the immediate precursors to the large and small rRNAs (23S and 16S). Processes some mRNAs, and tRNAs when they are encoded in the rRNA operon. Processes pre-crRNA and tracrRNA of type II CRISPR loci if present in the organism. This is Ribonuclease 3 from Staphylococcus saprophyticus subsp. saprophyticus (strain ATCC 15305 / DSM 20229 / NCIMB 8711 / NCTC 7292 / S-41).